We begin with the raw amino-acid sequence, 552 residues long: Thermosome subunit beta (552 aa).

It belongs to the TCP-1 chaperonin family. As to quaternary structure, forms a Heterooligomeric complex of two stacked nine-membered rings; one of alpha and the other of beta subunits. In terms of processing, the N-terminus is blocked.

Molecular chaperone; binds unfolded polypeptides in vitro, and has a weak ATPase activity. This is Thermosome subunit beta (thsB) from Sulfurisphaera tokodaii (strain DSM 16993 / JCM 10545 / NBRC 100140 / 7) (Sulfolobus tokodaii).